The primary structure comprises 108 residues: MAAPCLLRQGRAGALKTMLQEAQVFRGLASTVSLSAESGKSEKGQPHNPKKQSPPKKPAPVPAEPFDNTTYKNLQHHDYTTYTFLDLNLELSKFRMPQPSSGRESPRH.

A mitochondrion-targeting transit peptide spans 1-34 (MAAPCLLRQGRAGALKTMLQEAQVFRGLASTVSL). Positions 33-72 (SLSAESGKSEKGQPHNPKKQSPPKKPAPVPAEPFDNTTYK) are disordered. S105 carries the post-translational modification Phosphoserine.

This sequence belongs to the complex I NDUFV3 subunit family. In terms of assembly, complex I is composed of 45 different subunits. This is a component of the flavoprotein-sulfur (FP) fragment of the enzyme.

Its subcellular location is the mitochondrion inner membrane. Functionally, accessory subunit of the mitochondrial membrane respiratory chain NADH dehydrogenase (Complex I), that is believed not to be involved in catalysis. Complex I functions in the transfer of electrons from NADH to the respiratory chain. The immediate electron acceptor for the enzyme is believed to be ubiquinone. May be the terminally assembled subunit of Complex I. The polypeptide is NADH dehydrogenase [ubiquinone] flavoprotein 3, mitochondrial (NDUFV3) (Pongo pygmaeus (Bornean orangutan)).